A 357-amino-acid polypeptide reads, in one-letter code: MSLTRLLIRDFRNIETADLALSPGFNFLVGANGSGKTSVLEAIYTLGHGRAFRSLQIGRVIRHEQEAFVLHGRLQGEERETAIGLTKDKQGDSKVRIDGTDGHKVAELAHLMPMQLITPEGFTLLNGGPKYRRAFLDWGCFHNEPGFFTAWSNLKRLLKQRNAALRQVTRYEQLRPWDKELIPLAEQISTWRAEYSAGIAADMADTCKQFLPEFSLTFSFQRGWEKETEYAEVLERNFERDRQLTYTAHGPHKADLRIRADGAPVEDTLSRGQLKLLMCALRLAQGEFLTRESGRRCLYLIDDFASELDDERRGLLASRLKATQSQVFVSAISAEHVIDMSDENSKMFTVEKGKITD.

An ATP-binding site is contributed by 30–37; it reads GANGSGKT.

The protein belongs to the RecF family.

It localises to the cytoplasm. The RecF protein is involved in DNA metabolism; it is required for DNA replication and normal SOS inducibility. RecF binds preferentially to single-stranded, linear DNA. It also seems to bind ATP. This is DNA replication and repair protein RecF from Escherichia coli O139:H28 (strain E24377A / ETEC).